The chain runs to 428 residues: 3-phosphoshikimate 1-carboxyvinyltransferase (428 aa).

Residues Lys19, Ser20, and Arg24 each coordinate 3-phosphoshikimate. Lys19 is a phosphoenolpyruvate binding site. Phosphoenolpyruvate-binding residues include Gly91 and Arg119. 3-phosphoshikimate is bound by residues Ser164, Gln166, Asp312, and Lys339. Gln166 serves as a coordination point for phosphoenolpyruvate. Asp312 functions as the Proton acceptor in the catalytic mechanism. Residues Arg343 and Arg386 each contribute to the phosphoenolpyruvate site.

This sequence belongs to the EPSP synthase family. Monomer.

The protein localises to the cytoplasm. The catalysed reaction is 3-phosphoshikimate + phosphoenolpyruvate = 5-O-(1-carboxyvinyl)-3-phosphoshikimate + phosphate. It participates in metabolic intermediate biosynthesis; chorismate biosynthesis; chorismate from D-erythrose 4-phosphate and phosphoenolpyruvate: step 6/7. Catalyzes the transfer of the enolpyruvyl moiety of phosphoenolpyruvate (PEP) to the 5-hydroxyl of shikimate-3-phosphate (S3P) to produce enolpyruvyl shikimate-3-phosphate and inorganic phosphate. This Bacillus subtilis (strain 168) protein is 3-phosphoshikimate 1-carboxyvinyltransferase.